Reading from the N-terminus, the 134-residue chain is Small ribosomal subunit protein uS8c (134 aa).

The protein belongs to the universal ribosomal protein uS8 family. As to quaternary structure, part of the 30S ribosomal subunit.

The protein localises to the plastid. It is found in the chloroplast. One of the primary rRNA binding proteins, it binds directly to 16S rRNA central domain where it helps coordinate assembly of the platform of the 30S subunit. The sequence is that of Small ribosomal subunit protein uS8c (rps8) from Lepidium virginicum (Virginia pepperweed).